The primary structure comprises 199 residues: Streptomycin biosynthesis protein StrG (199 aa).

It participates in antibiotic biosynthesis; streptomycin biosynthesis. May be involved in the formation of N-methyl-L-glucosamine. This chain is Streptomycin biosynthesis protein StrG (strG), found in Streptomyces griseus.